The sequence spans 286 residues: Ribosome-inactivating protein beta-momorcharin (286 aa).

The N-terminal stretch at 1–23 is a signal peptide; that stretch reads MVKCLLLSFLIIAIFIGVPTAKG. An N-linked (GlcNAc...) asparagine glycan is attached at Asn-74. Residues Tyr-93, Tyr-132, Glu-181, and Arg-184 contribute to the active site.

This sequence belongs to the ribosome-inactivating protein family. Type 1 RIP subfamily. Bound to a branched hexasaccharide.

It catalyses the reaction Endohydrolysis of the N-glycosidic bond at one specific adenosine on the 28S rRNA.. Functionally, irreversibly relaxes supercoiled DNA and catalyzes double-stranded breakage. Also acts as a ribosome inactivating protein. This Momordica charantia (Bitter gourd) protein is Ribosome-inactivating protein beta-momorcharin (MAP30).